Reading from the N-terminus, the 65-residue chain is Metallothionein-like protein type 3 (65 aa).

Belongs to the metallothionein superfamily. Type 15 family.

Metallothioneins have a high content of cysteine residues that bind various heavy metals. This is Metallothionein-like protein type 3 from Carica papaya (Papaya).